The primary structure comprises 281 residues: UPF0162 protein PD_0709 (281 aa).

2 TPR repeats span residues 193–226 (VRILRNLHSVYANTDRWDRAARCADRILKLVPNQ) and 227–260 (PEALRDRGLAYLQLGHRSGALNDLKRYLQLYPST).

The protein belongs to the UPF0162 family.

The protein is UPF0162 protein PD_0709 of Xylella fastidiosa (strain Temecula1 / ATCC 700964).